The primary structure comprises 183 residues: Somatotropin (183 aa).

His-19 is a Zn(2+) binding site. The interval 38 to 67 (EEQRHSHKSSPSAFCQSETIPAPTGKEDAQ) is disordered. Residues 46 to 56 (SSPSAFCQSET) show a composition bias toward polar residues. An intrachain disulfide couples Cys-52 to Cys-156. Glu-165 lines the Zn(2+) pocket. A disulfide bond links Cys-173 and Cys-181.

It belongs to the somatotropin/prolactin family.

It localises to the secreted. In terms of biological role, growth hormone plays an important role in growth control and is involved in the regulation of several anabolic processes. Implicated as an osmoregulatory substance important for seawater adaptation. This is Somatotropin (gh) from Prionace glauca (Blue shark).